Reading from the N-terminus, the 562-residue chain is Phosphopantothenoylcysteine decarboxylase subunit SIS2 (562 aa).

The span at Met-1–Lys-10 shows a compositional bias: polar residues. 3 disordered regions span residues Met-1–Thr-63, Phe-97–Asp-165, and Gly-490–Gln-562. Basic and acidic residues predominate over residues Gly-27 to Asp-42. Polar residues-rich tracts occupy residues Ile-44–Thr-63 and Asp-99–Lys-113. Residues Ser-47, Ser-50, Ser-54, and Ser-56 each carry the phosphoserine modification. A compositionally biased stretch (low complexity) spans Ser-121 to Pro-134. Over residues Asn-142–Pro-156 the composition is skewed to polar residues. Ser-155 bears the Phosphoserine mark. The segment covering Glu-496–Glu-553 has biased composition (acidic residues).

It belongs to the HFCD (homooligomeric flavin containing Cys decarboxylase) superfamily. In terms of assembly, interacts with the C-terminal domain of PPZ1. Component of the phosphopantothenoylcysteine decarboxylase (PPCDC) complex, a heterotrimer composed of CAB3, SIS2 and VHS3.

It is found in the nucleus. The protein localises to the cytoplasm. In terms of biological role, component of the phosphopantothenoylcysteine decarboxylase (PPCDC) involved in the coenzyme A synthesis. Acts as an inhibitory subunit of protein phosphatase PPZ1, which is involved in many cellular processes such as G1-S transition or salt tolerance. Also modulates the expression of the ENA1 ATPase. This chain is Phosphopantothenoylcysteine decarboxylase subunit SIS2 (SIS2), found in Saccharomyces cerevisiae (strain ATCC 204508 / S288c) (Baker's yeast).